The following is a 220-amino-acid chain: A-type ATP synthase subunit K (220 aa).

6 helical membrane-spanning segments follow: residues 5–25 (LILGAVGAGLAVGIAGLGSGI), 63–83 (FLVAILILFVFKTVSPWAMFA), 90–110 (LAGLSAIGQGIAASAGLGAVA), 125–145 (LPETQAIYGLLIAILLLVGVF), 155–175 (AALGAGFAVGFAGLSGIGQGI), and 195–215 (LVLAVMPETFAIFGLLIAILI).

The protein belongs to the V-ATPase proteolipid subunit family. The A-type ATPase is composed of subunits A(3), B(3), C, D, E(1 or 2), F, H(2), I and K(x). Subunit K dimerizes and may form higher oligomers.

Its subcellular location is the cell membrane. In terms of biological role, component of the A-type ATP synthase that produces ATP from ADP in the presence of a proton gradient across the membrane. The sequence is that of A-type ATP synthase subunit K from Methanocaldococcus jannaschii (strain ATCC 43067 / DSM 2661 / JAL-1 / JCM 10045 / NBRC 100440) (Methanococcus jannaschii).